We begin with the raw amino-acid sequence, 293 residues long: ATP synthase gamma chain (293 aa).

Belongs to the ATPase gamma chain family. In terms of assembly, F-type ATPases have 2 components, CF(1) - the catalytic core - and CF(0) - the membrane proton channel. CF(1) has five subunits: alpha(3), beta(3), gamma(1), delta(1), epsilon(1). CF(0) has three main subunits: a, b and c.

It is found in the cell membrane. Produces ATP from ADP in the presence of a proton gradient across the membrane. The gamma chain is believed to be important in regulating ATPase activity and the flow of protons through the CF(0) complex. The sequence is that of ATP synthase gamma chain from Methylacidiphilum infernorum (isolate V4) (Methylokorus infernorum (strain V4)).